The sequence spans 989 residues: Mediator of RNA polymerase II transcription subunit 24 (989 aa).

Short sequence motifs (LXXLL motif) lie at residues 128–132, 344–348, 448–452, 557–561, 788–792, and 857–861; these read LHWLL, LTPLL, LDLLL, LVALL, LPGLL, and LMRLL. A phosphoserine mark is found at Ser-862 and Ser-873.

It belongs to the Mediator complex subunit 24 family. Component of the Mediator complex, which is composed of MED1, MED4, MED6, MED7, MED8, MED9, MED10, MED11, MED12, MED13, MED13L, MED14, MED15, MED16, MED17, MED18, MED19, MED20, MED21, MED22, MED23, MED24, MED25, MED26, MED27, MED29, MED30, MED31, CCNC, CDK8 and CDC2L6/CDK11. The MED12, MED13, CCNC and CDK8 subunits form a distinct module termed the CDK8 module. Mediator containing the CDK8 module is less active than Mediator lacking this module in supporting transcriptional activation. Individual preparations of the Mediator complex lacking one or more distinct subunits have been variously termed ARC, CRSP, DRIP, PC2, SMCC and TRAP. Interacts with AR. In terms of tissue distribution, ubiquitous. Abundant in skeletal muscle, heart and placenta.

The protein localises to the nucleus. Its function is as follows. Component of the Mediator complex, a coactivator involved in the regulated transcription of nearly all RNA polymerase II-dependent genes. Mediator functions as a bridge to convey information from gene-specific regulatory proteins to the basal RNA polymerase II transcription machinery. Mediator is recruited to promoters by direct interactions with regulatory proteins and serves as a scaffold for the assembly of a functional preinitiation complex with RNA polymerase II and the general transcription factors. This is Mediator of RNA polymerase II transcription subunit 24 (MED24) from Homo sapiens (Human).